A 245-amino-acid polypeptide reads, in one-letter code: MKSIALTSLSLLPSALAQTIYLAGDSTMASSTPGWGDYIADSVSVEISNQAIGGRSARSYTREGRFQAIADVLQAGDYVVIEFGHNDGGSLSNDNGRTDCPGDGDETCETVYNGVAETVLTFPAYIENAALLFLEKGANVLISSQTPNNPWESGTFSYTPNRFVGYAELAAQRAGVDYVDHGAYTASIFEALGADTVNSFYPNDHTHTNAEGSSVVADAFLKAVVCSGVALNDVLTRTDFDGECL.

An N-terminal signal peptide occupies residues 1–17; the sequence is MKSIALTSLSLLPSALA. Serine 26 (nucleophile) is an active-site residue. Cysteine 100 and cysteine 108 are joined by a disulfide. Residues aspartate 204 and histidine 207 contribute to the active site. Cysteine 226 and cysteine 244 are oxidised to a cystine.

Belongs to the 'GDSL' lipolytic enzyme family.

It is found in the secreted. The enzyme catalyses Hydrolytic cleavage of 2-O-acetyl- or 3-O-acetyl groups of alpha-D-galacturonic acid in rhamnogalacturonan I.. Its function is as follows. Plays a key role in the degradation of rhamnogalacturonan in the cell wall. Involved in degradation of pectin. The protein is Rhamnogalacturonan acetylesterase of Emericella nidulans (strain FGSC A4 / ATCC 38163 / CBS 112.46 / NRRL 194 / M139) (Aspergillus nidulans).